The chain runs to 408 residues: Succinylornithine transaminase (408 aa).

The residue at position 252 (Lys252) is an N6-(pyridoxal phosphate)lysine.

The protein belongs to the class-III pyridoxal-phosphate-dependent aminotransferase family. AstC subfamily. Requires pyridoxal 5'-phosphate as cofactor.

It carries out the reaction N(2)-succinyl-L-ornithine + 2-oxoglutarate = N-succinyl-L-glutamate 5-semialdehyde + L-glutamate. Its pathway is amino-acid degradation; L-arginine degradation via AST pathway; L-glutamate and succinate from L-arginine: step 3/5. Functionally, catalyzes the transamination of N(2)-succinylornithine and alpha-ketoglutarate into N(2)-succinylglutamate semialdehyde and glutamate. Can also act as an acetylornithine aminotransferase. The polypeptide is Succinylornithine transaminase (Salmonella heidelberg (strain SL476)).